The primary structure comprises 287 residues: Transcription initiation factor IIB 1 (287 aa).

Residues 3–31 (HPHRCPECDGTIRETDTEHVCADCGLVVT) form a TFIIB-type zinc finger. Zn(2+) is bound by residues Cys-7, Cys-10, Cys-23, and Cys-26. Basic and acidic residues predominate over residues 40–53 (EWRTFSDDPDHAPE). Residues 40–63 (EWRTFSDDPDHAPERTGAPLTRSR) form a disordered region. 2 tandem repeats follow at residues 111-194 (TEIR…NRDL) and 205-286 (EYLP…NLTD).

It belongs to the TFIIB family.

Stabilizes TBP binding to an archaeal box-A promoter. Also responsible for recruiting RNA polymerase II to the pre-initiation complex (DNA-TBP-TFIIB). The polypeptide is Transcription initiation factor IIB 1 (Halobacterium salinarum (strain ATCC 700922 / JCM 11081 / NRC-1) (Halobacterium halobium)).